A 2564-amino-acid polypeptide reads, in one-letter code: Spectrin beta chain, non-erythrocytic 4 (2564 aa).

The tract at residues 1–37 (MAQVPGEVDNMEGLPAPNNNPAARWESPDRGWEREQP) is disordered. The tract at residues 1–282 (MAQVPGEVDN…IITYVVSFYH (282 aa)) is actin-binding. A compositionally biased stretch (basic and acidic residues) spans 26–36 (ESPDRGWEREQ). 2 consecutive Calponin-homology (CH) domains span residues 61 to 165 (AVQK…LRFQ) and 180 to 285 (RSAK…HYFS). Spectrin repeat units follow at residues 311 to 418 (IERY…AALR), 430 to 533 (LAQR…RLEQ), 536 to 641 (ALQK…AELE), 774 to 879 (ALHQ…WLRD), 884 to 982 (YRMF…RKEE), 1089 to 1196 (RLQR…EALV), 1306 to 1407 (ELQH…RQLF), 1412 to 1512 (ADQL…RLLL), 1515 to 1617 (KELH…QQVL), 1623 to 1725 (VEQY…ALEQ), 1728 to 1830 (WLYQ…AQLL), 1835 to 1935 (ELHK…EDAR), 1944 to 2046 (ALRF…WLQQ), and 2049 to 2123 (EVHQ…QSKQ). The segment at 1853 to 1872 (KRRRLPRLTTPPEPRPSASS) is disordered. The segment covering 2208–2225 (PAAPEDAAETPATPAAAE) has biased composition (low complexity). 2 disordered regions span residues 2208–2439 (PAAP…KSSN) and 2533–2564 (ARWG…GRRK). Basic and acidic residues-rich tracts occupy residues 2227 to 2254 (VRPR…RQES), 2268 to 2278 (ERQESAEHEAA), and 2287 to 2318 (EQME…DLVK). A compositionally biased stretch (pro residues) spans 2343-2355 (PSLPQPRELPPGR). 2 stretches are compositionally biased toward basic and acidic residues: residues 2362-2377 (LPER…ARDR) and 2424-2435 (FLLRKRELDANR). A PH domain is found at 2418–2527 (TVQHEGFLLR…WLEAVASSVA (110 aa)). Polar residues predominate over residues 2538-2547 (TLPTTSSTDE). Over residues 2548–2564 (GNPKREGGDRRASGRRK) the composition is skewed to basic and acidic residues.

It belongs to the spectrin family. Expressed in skeletal muscle at the sarcolemma and in the muscle capillaries (at protein level). Abundantly expressed in brain and pancreatic islets.

The protein localises to the cytoplasm. It is found in the cytoskeleton. It localises to the cell cortex. This Homo sapiens (Human) protein is Spectrin beta chain, non-erythrocytic 4 (SPTBN4).